The primary structure comprises 202 residues: Apolipoprotein R (202 aa).

The signal sequence occupies residues 1–28; sequence MPPNLQRIFPALCLLGVLFLLHCTPVLC. Sushi domains follow at residues 29-87 and 88-145; these read GCDN…QCKA and LCPK…KCEW. 4 disulfide bridges follow: Cys-30/Cys-73, Cys-59/Cys-85, Cys-89/Cys-130, and Cys-116/Cys-143.

In terms of assembly, forms high molecular weight disulfide-linked complexes. In terms of tissue distribution, plasma. Found on very low-density lipoprotein (VLDL), on chylomicrons, and in the D &gt; 1.21 g/ml fraction of pig plasma. Found in liver, spleen, lung, bone marrow and lymph node.

The protein resides in the secreted. In terms of biological role, may be a lipoprotein-borne regulator of either the coagulation or the complement cascades. The polypeptide is Apolipoprotein R (APOR) (Sus scrofa (Pig)).